The chain runs to 214 residues: Glycerol-3-phosphate acyltransferase (214 aa).

A run of 5 helical transmembrane segments spans residues 4–24, 52–72, 82–102, 118–138, and 159–179; these read LIVA…IVSA, AAIL…WFVV, ETSV…PVFF, LAIN…VAFF, and FLFG…LLVW.

This sequence belongs to the PlsY family. In terms of assembly, probably interacts with PlsX.

It localises to the cell inner membrane. It catalyses the reaction an acyl phosphate + sn-glycerol 3-phosphate = a 1-acyl-sn-glycero-3-phosphate + phosphate. It participates in lipid metabolism; phospholipid metabolism. In terms of biological role, catalyzes the transfer of an acyl group from acyl-phosphate (acyl-PO(4)) to glycerol-3-phosphate (G3P) to form lysophosphatidic acid (LPA). This enzyme utilizes acyl-phosphate as fatty acyl donor, but not acyl-CoA or acyl-ACP. The sequence is that of Glycerol-3-phosphate acyltransferase from Paraburkholderia phytofirmans (strain DSM 17436 / LMG 22146 / PsJN) (Burkholderia phytofirmans).